The sequence spans 105 residues: Nitrogenase-stabilizing/protective protein NifW 2 (105 aa).

This sequence belongs to the NifW family.

Its function is as follows. May protect the nitrogenase Fe-Mo protein from oxidative damage. The sequence is that of Nitrogenase-stabilizing/protective protein NifW 2 (nifW2) from Trichormus variabilis (strain ATCC 29413 / PCC 7937) (Anabaena variabilis).